We begin with the raw amino-acid sequence, 171 residues long: MSVLNVLIYPDERLKTIAEPVTEFNDELQTFIDDMFETMYQEEGIGLAATQVDVHKRVITIDITGEKTEQLVLINPELLDGEGETGIEEGCLSLPGLRGFVPRKEKVTVKALNRQGEEFTLHADGLLAICIQHEIDHLNGIVFADYLSPLKRNRMKEKLVKLQKQISRHQA.

Fe cation is bound by residues Cys-91 and His-133. Glu-134 is a catalytic residue. His-137 lines the Fe cation pocket.

Belongs to the polypeptide deformylase family. Fe(2+) is required as a cofactor.

The catalysed reaction is N-terminal N-formyl-L-methionyl-[peptide] + H2O = N-terminal L-methionyl-[peptide] + formate. Functionally, removes the formyl group from the N-terminal Met of newly synthesized proteins. Requires at least a dipeptide for an efficient rate of reaction. N-terminal L-methionine is a prerequisite for activity but the enzyme has broad specificity at other positions. The chain is Peptide deformylase from Mannheimia succiniciproducens (strain KCTC 0769BP / MBEL55E).